Here is a 140-residue protein sequence, read N- to C-terminus: Nucleoside diphosphate kinase (140 aa).

Positions 11, 59, 87, 93, 104, and 114 each coordinate ATP. The active-site Pros-phosphohistidine intermediate is His117.

The protein belongs to the NDK family. Homotetramer. Requires Mg(2+) as cofactor.

It is found in the cytoplasm. The catalysed reaction is a 2'-deoxyribonucleoside 5'-diphosphate + ATP = a 2'-deoxyribonucleoside 5'-triphosphate + ADP. It carries out the reaction a ribonucleoside 5'-diphosphate + ATP = a ribonucleoside 5'-triphosphate + ADP. In terms of biological role, major role in the synthesis of nucleoside triphosphates other than ATP. The ATP gamma phosphate is transferred to the NDP beta phosphate via a ping-pong mechanism, using a phosphorylated active-site intermediate. The sequence is that of Nucleoside diphosphate kinase from Gluconobacter oxydans (strain 621H) (Gluconobacter suboxydans).